A 143-amino-acid polypeptide reads, in one-letter code: Transcriptional regulator MraZ (143 aa).

2 SpoVT-AbrB domains span residues 5–47 and 76–119; these read TFTP…PKAE and ADEQ…DAES.

This sequence belongs to the MraZ family. As to quaternary structure, forms oligomers.

Its subcellular location is the cytoplasm. It localises to the nucleoid. In Corynebacterium jeikeium (strain K411), this protein is Transcriptional regulator MraZ.